The following is a 936-amino-acid chain: General transcription factor II-I repeat domain-containing protein 2 (936 aa).

Residues 95-189 (EACPGEAQLL…FLGAESQLGG (95 aa)) form a GTF2I-like 1 repeat. Positions 199–222 (PTVPPNDSYGPVSVKTEPMEDSGT) are disordered. The GTF2I-like 2 repeat unit spans residues 319–413 (LSGLEKIKQL…LPGLELSNVG (95 aa)).

Belongs to the TFII-I family. As to expression, ubiquitous.

Its subcellular location is the nucleus. This is General transcription factor II-I repeat domain-containing protein 2 (Gtf2ird2) from Mus musculus (Mouse).